The following is a 738-amino-acid chain: Phosphoribosylformylglycinamidine synthase subunit PurL (738 aa).

Residue His53 is part of the active site. 2 residues coordinate ATP: Tyr56 and Lys95. Position 97 (Glu97) interacts with Mg(2+). Substrate-binding positions include 98–101 and Arg120; that span reads SHNH. Catalysis depends on His99, which acts as the Proton acceptor. A Mg(2+)-binding site is contributed by Asp121. Gln244 contacts substrate. Asp274 lines the Mg(2+) pocket. 318–320 serves as a coordination point for substrate; the sequence is ESQ. Asp499 and Gly536 together coordinate ATP. Residue Asn537 coordinates Mg(2+). Ser539 contributes to the substrate binding site.

Belongs to the FGAMS family. In terms of assembly, monomer. Part of the FGAM synthase complex composed of 1 PurL, 1 PurQ and 2 PurS subunits.

The protein resides in the cytoplasm. It catalyses the reaction N(2)-formyl-N(1)-(5-phospho-beta-D-ribosyl)glycinamide + L-glutamine + ATP + H2O = 2-formamido-N(1)-(5-O-phospho-beta-D-ribosyl)acetamidine + L-glutamate + ADP + phosphate + H(+). It participates in purine metabolism; IMP biosynthesis via de novo pathway; 5-amino-1-(5-phospho-D-ribosyl)imidazole from N(2)-formyl-N(1)-(5-phospho-D-ribosyl)glycinamide: step 1/2. In terms of biological role, part of the phosphoribosylformylglycinamidine synthase complex involved in the purines biosynthetic pathway. Catalyzes the ATP-dependent conversion of formylglycinamide ribonucleotide (FGAR) and glutamine to yield formylglycinamidine ribonucleotide (FGAM) and glutamate. The FGAM synthase complex is composed of three subunits. PurQ produces an ammonia molecule by converting glutamine to glutamate. PurL transfers the ammonia molecule to FGAR to form FGAM in an ATP-dependent manner. PurS interacts with PurQ and PurL and is thought to assist in the transfer of the ammonia molecule from PurQ to PurL. The polypeptide is Phosphoribosylformylglycinamidine synthase subunit PurL (Leuconostoc mesenteroides subsp. mesenteroides (strain ATCC 8293 / DSM 20343 / BCRC 11652 / CCM 1803 / JCM 6124 / NCDO 523 / NBRC 100496 / NCIMB 8023 / NCTC 12954 / NRRL B-1118 / 37Y)).